Consider the following 475-residue polypeptide: Pup--protein ligase (475 aa).

Glu19 contacts Mg(2+). Arg64 is an ATP binding site. Tyr66 is a binding site for Mg(2+). Asp68 acts as the Proton acceptor in catalysis. Glu74 contacts Mg(2+). ATP contacts are provided by Thr77 and Trp436.

The protein belongs to the Pup ligase/Pup deamidase family. Pup-conjugating enzyme subfamily.

It carries out the reaction ATP + [prokaryotic ubiquitin-like protein]-L-glutamate + [protein]-L-lysine = ADP + phosphate + N(6)-([prokaryotic ubiquitin-like protein]-gamma-L-glutamyl)-[protein]-L-lysine.. The protein operates within protein degradation; proteasomal Pup-dependent pathway. It functions in the pathway protein modification; protein pupylation. In terms of biological role, catalyzes the covalent attachment of the prokaryotic ubiquitin-like protein modifier Pup to the proteasomal substrate proteins, thereby targeting them for proteasomal degradation. This tagging system is termed pupylation. The ligation reaction involves the side-chain carboxylate of the C-terminal glutamate of Pup and the side-chain amino group of a substrate lysine. The protein is Pup--protein ligase of Corynebacterium aurimucosum (strain ATCC 700975 / DSM 44827 / CIP 107346 / CN-1) (Corynebacterium nigricans).